The following is a 197-amino-acid chain: HTH-type transcriptional regulator BetI (197 aa).

The region spanning 8–68 is the HTH tetR-type domain; sequence PIRRQQLIEA…ATMRYLMNAL (61 aa). Positions 31-50 form a DNA-binding region, H-T-H motif; it reads SIALIARLAGVSNGIISHYF.

Its pathway is amine and polyamine biosynthesis; betaine biosynthesis via choline pathway [regulation]. Repressor involved in the biosynthesis of the osmoprotectant glycine betaine. It represses transcription of the choline transporter BetT and the genes of BetAB involved in the synthesis of glycine betaine. This is HTH-type transcriptional regulator BetI from Pseudomonas fluorescens (strain SBW25).